Consider the following 1052-residue polypeptide: Multidrug resistance protein MdtB (1052 aa).

A run of 11 helical transmembrane segments spans residues 15 to 37 (LFIL…GIIG), 345 to 362 (FELL…YLFL), 367 to 389 (ATII…MYFL), 396 to 418 (LTLM…VIEN), 438 to 460 (GEIG…PLLF), 472 to 494 (FAVT…TPMM), 535 to 557 (HPWL…YLLI), 867 to 889 (LWLI…ESFI), 909 to 931 (LMLT…IGIV), 968 to 990 (ILMT…GVGA), and 1000 to 1022 (MVGG…YLLF). Residues 1032 to 1052 (KNRHRDEDIDSSELLNGQEPQ) form a disordered region.

It belongs to the resistance-nodulation-cell division (RND) (TC 2.A.6) family. MdtB subfamily. Part of a tripartite efflux system composed of MdtA, MdtB and MdtC. MdtB forms a heteromultimer with MdtC.

The protein resides in the cell inner membrane. The sequence is that of Multidrug resistance protein MdtB from Yersinia pseudotuberculosis serotype I (strain IP32953).